A 100-amino-acid polypeptide reads, in one-letter code: Urease subunit gamma (100 aa).

It belongs to the urease gamma subunit family. As to quaternary structure, heterotrimer of UreA (gamma), UreB (beta) and UreC (alpha) subunits. Three heterotrimers associate to form the active enzyme.

Its subcellular location is the cytoplasm. The catalysed reaction is urea + 2 H2O + H(+) = hydrogencarbonate + 2 NH4(+). It participates in nitrogen metabolism; urea degradation; CO(2) and NH(3) from urea (urease route): step 1/1. The protein is Urease subunit gamma of Pseudomonas putida (strain W619).